The following is a 348-amino-acid chain: Holliday junction branch migration complex subunit RuvB (348 aa).

The interval M1–T20 is disordered. The interval M1 to Y183 is large ATPase domain (RuvB-L). ATP contacts are provided by residues L22, R23, G64, K67, T68, T69, E130–F132, R173, Y183, and R220. Mg(2+) is bound at residue T68. The small ATPAse domain (RuvB-S) stretch occupies residues T184–E254. The tract at residues A257 to A348 is head domain (RuvB-H). DNA is bound by residues R293, R312, and R317.

Belongs to the RuvB family. As to quaternary structure, homohexamer. Forms an RuvA(8)-RuvB(12)-Holliday junction (HJ) complex. HJ DNA is sandwiched between 2 RuvA tetramers; dsDNA enters through RuvA and exits via RuvB. An RuvB hexamer assembles on each DNA strand where it exits the tetramer. Each RuvB hexamer is contacted by two RuvA subunits (via domain III) on 2 adjacent RuvB subunits; this complex drives branch migration. In the full resolvosome a probable DNA-RuvA(4)-RuvB(12)-RuvC(2) complex forms which resolves the HJ.

It localises to the cytoplasm. The catalysed reaction is ATP + H2O = ADP + phosphate + H(+). Functionally, the RuvA-RuvB-RuvC complex processes Holliday junction (HJ) DNA during genetic recombination and DNA repair, while the RuvA-RuvB complex plays an important role in the rescue of blocked DNA replication forks via replication fork reversal (RFR). RuvA specifically binds to HJ cruciform DNA, conferring on it an open structure. The RuvB hexamer acts as an ATP-dependent pump, pulling dsDNA into and through the RuvAB complex. RuvB forms 2 homohexamers on either side of HJ DNA bound by 1 or 2 RuvA tetramers; 4 subunits per hexamer contact DNA at a time. Coordinated motions by a converter formed by DNA-disengaged RuvB subunits stimulates ATP hydrolysis and nucleotide exchange. Immobilization of the converter enables RuvB to convert the ATP-contained energy into a lever motion, pulling 2 nucleotides of DNA out of the RuvA tetramer per ATP hydrolyzed, thus driving DNA branch migration. The RuvB motors rotate together with the DNA substrate, which together with the progressing nucleotide cycle form the mechanistic basis for DNA recombination by continuous HJ branch migration. Branch migration allows RuvC to scan DNA until it finds its consensus sequence, where it cleaves and resolves cruciform DNA. The sequence is that of Holliday junction branch migration complex subunit RuvB from Bradyrhizobium sp. (strain BTAi1 / ATCC BAA-1182).